Here is a 184-residue protein sequence, read N- to C-terminus: NADH-quinone oxidoreductase subunit B (184 aa).

4 residues coordinate [4Fe-4S] cluster: Cys37, Cys38, Cys103, and Cys132. The tract at residues 164-184 (HEREEAAKHALPTHSMKGLLR) is disordered.

The protein belongs to the complex I 20 kDa subunit family. As to quaternary structure, NDH-1 is composed of 14 different subunits. Subunits NuoB, C, D, E, F, and G constitute the peripheral sector of the complex. [4Fe-4S] cluster is required as a cofactor.

It localises to the cell membrane. It catalyses the reaction a quinone + NADH + 5 H(+)(in) = a quinol + NAD(+) + 4 H(+)(out). NDH-1 shuttles electrons from NADH, via FMN and iron-sulfur (Fe-S) centers, to quinones in the respiratory chain. The immediate electron acceptor for the enzyme in this species is believed to be a menaquinone. Couples the redox reaction to proton translocation (for every two electrons transferred, four hydrogen ions are translocated across the cytoplasmic membrane), and thus conserves the redox energy in a proton gradient. The protein is NADH-quinone oxidoreductase subunit B of Acidothermus cellulolyticus (strain ATCC 43068 / DSM 8971 / 11B).